Here is a 252-residue protein sequence, read N- to C-terminus: Adenosylcobinamide-GDP ribazoletransferase (252 aa).

Transmembrane regions (helical) follow at residues 36–56 (LVPI…MLLV), 59–79 (FFYK…TGGI), 109–129 (VGTN…VILT), 133–153 (PAYM…GSIV), 170–192 (SFID…VIFL), 199–218 (GYII…KYFT), and 228–248 (ILGA…YAVL).

Belongs to the CobS family. Mg(2+) serves as cofactor.

It localises to the cell membrane. It carries out the reaction alpha-ribazole + adenosylcob(III)inamide-GDP = adenosylcob(III)alamin + GMP + H(+). The enzyme catalyses alpha-ribazole 5'-phosphate + adenosylcob(III)inamide-GDP = adenosylcob(III)alamin 5'-phosphate + GMP + H(+). It functions in the pathway cofactor biosynthesis; adenosylcobalamin biosynthesis; adenosylcobalamin from cob(II)yrinate a,c-diamide: step 7/7. Functionally, joins adenosylcobinamide-GDP and alpha-ribazole to generate adenosylcobalamin (Ado-cobalamin). Also synthesizes adenosylcobalamin 5'-phosphate from adenosylcobinamide-GDP and alpha-ribazole 5'-phosphate. The polypeptide is Adenosylcobinamide-GDP ribazoletransferase (Clostridium acetobutylicum (strain ATCC 824 / DSM 792 / JCM 1419 / IAM 19013 / LMG 5710 / NBRC 13948 / NRRL B-527 / VKM B-1787 / 2291 / W)).